Reading from the N-terminus, the 127-residue chain is 3-aminoacrylate deaminase RutC (127 aa).

The protein belongs to the RutC family.

The enzyme catalyses (Z)-3-aminoacrylate + H2O + H(+) = 3-oxopropanoate + NH4(+). Its function is as follows. Involved in pyrimidine catabolism. Catalyzes the deamination of 3-aminoacrylate to malonic semialdehyde, a reaction that can also occur spontaneously. RutC may facilitate the reaction and modulate the metabolic fitness, rather than catalyzing essential functions. The sequence is that of 3-aminoacrylate deaminase RutC from Pseudomonas syringae pv. syringae (strain B728a).